The sequence spans 956 residues: Replication factor C subunit 1 (956 aa).

2 stretches are compositionally biased toward basic and acidic residues: residues 1 to 15 (MSDIRKWFMKAHEKG) and 50 to 74 (TADRRKTSKYFGKDKTKVKDEKEVE). Disordered regions lie at residues 1–206 (MSDI…TPDC) and 286–332 (KKSL…AKGK). Positions 158–183 (RGRGGRAAPGASTGGRGRGGGRGGFM) are enriched in gly residues. 2 stretches are compositionally biased toward basic and acidic residues: residues 186–200 (GERKDPPHKGEKEVP) and 288–298 (SLPERSNKGTE). The 91-residue stretch at 202–292 (GTPDCLAGLT…KPVKKSLPER (91 aa)) folds into the BRCT domain. 399–406 (SGTPGIGK) serves as a coordination point for ATP. Residues 858-956 (LEPTVDSLRD…GRGSGAKRKR (99 aa)) are disordered. Over residues 866-892 (RDEDGEPLADNEEGNGSDAEEDSEEAT) the composition is skewed to acidic residues. Positions 916-925 (KGAGSSGSRK) are enriched in low complexity.

It belongs to the activator 1 large subunit family. In terms of assembly, heterotetramer of subunits RFC2, RFC3, RFC4 and RFC5 that can form a complex with RFC1. In terms of tissue distribution, expressed at high levels in flowers and siliques, and at lower levels in roots, stems and leaves.

Its subcellular location is the nucleus. In terms of biological role, plays a role as mediator of transcriptional gene silencing (TGS), DNA replication, DNA repair, hypersensitive response (HR) and telomere length regulation. Is required in meiosis for DNA double-strand break (DSB) repair during meiotic homologous recombination. May participate in the RAD51-mediated recombination intermediate repair process. Is important for lagging strand synthesis. Promotes meiotic recombination via a specific pathway for crossovers (COs) that involves the formation of double Holliday Junction (dHJ) intermediates. The protein is Replication factor C subunit 1 (RFC1) of Arabidopsis thaliana (Mouse-ear cress).